We begin with the raw amino-acid sequence, 92 residues long: MTTKKAYMYVLECVDKTLYTGYTTDLKKRLATHNAGKGAKYTRYRLPVSLLYYEVFDSKEAAMSAEALFKKRKTRSQKLAYIATHQKEKKNH.

Residues 4–80 (KKAYMYVLEC…KRKTRSQKLA (77 aa)) enclose the GIY-YIG domain.

This sequence belongs to the UPF0213 family.

The protein is UPF0213 protein MGAS9429_Spy1198 of Streptococcus pyogenes serotype M12 (strain MGAS9429).